The following is a 149-amino-acid chain: Large ribosomal subunit protein bL9 (149 aa).

The protein belongs to the bacterial ribosomal protein bL9 family.

Binds to the 23S rRNA. This Leptospira interrogans serogroup Icterohaemorrhagiae serovar copenhageni (strain Fiocruz L1-130) protein is Large ribosomal subunit protein bL9.